Here is a 294-residue protein sequence, read N- to C-terminus: MPFIKAVKSSPYFSRYQTKYRRRREGKTDYYARKRLIAQAKNKYNAPKYRLVVRFSNRFVTCQIVSSRVNGDYVLAHAHSSELPRYGIKWGLANWTAAYATGLLVARRALAKVGLADKYEGVTEPEGEFELTEAIEDGPRPFKVFLDVGLKRTSTGSRVFGAMKGASDGGLFIPHSPNRFPGFDIETEELDDETLRKYIYGGHVAEYMEMLIDDDEERYQKQFSGLIADGIESDQLEDIYAEAYAKIREDPSFQKSGKDAAAFKAESLKHTQRKLTAEERKERFNAKVIEAGRA.

A Phosphoserine modification is found at S10. Phosphotyrosine is present on Y12. S81 carries the phosphoserine modification.

Belongs to the universal ribosomal protein uL18 family. In terms of assembly, component of the large ribosomal subunit (LSU). Mature yeast ribosomes consist of a small (40S) and a large (60S) subunit. The 40S small subunit contains 1 molecule of ribosomal RNA (18S rRNA) and 33 different proteins (encoded by 57 genes). The large 60S subunit contains 3 rRNA molecules (25S, 5.8S and 5S rRNA) and 46 different proteins (encoded by 81 genes). Component of a hexameric 5S RNP precursor complex, composed of 5S RNA, rrs1, rpf2, rpl5a/rpl5b, rpl11a/rpl11b and syo1; this complex acts as a precursor for ribosome assembly. rpl5a/rpl5b/uL18 forms a heterotrimeric complex with syo1 and rpl11a/rpl11b/uL5. Interaction of this complex with KAP104 allows the nuclear import of the heterotrimer.

The protein localises to the cytoplasm. The protein resides in the nucleus. Its function is as follows. Component of the ribosome, a large ribonucleoprotein complex responsible for the synthesis of proteins in the cell. The small ribosomal subunit (SSU) binds messenger RNAs (mRNAs) and translates the encoded message by selecting cognate aminoacyl-transfer RNA (tRNA) molecules. The large subunit (LSU) contains the ribosomal catalytic site termed the peptidyl transferase center (PTC), which catalyzes the formation of peptide bonds, thereby polymerizing the amino acids delivered by tRNAs into a polypeptide chain. The nascent polypeptides leave the ribosome through a tunnel in the LSU and interact with protein factors that function in enzymatic processing, targeting, and the membrane insertion of nascent chains at the exit of the ribosomal tunnel. The sequence is that of Large ribosomal subunit protein uL18A (rpl501) from Schizosaccharomyces pombe (strain 972 / ATCC 24843) (Fission yeast).